Here is an 846-residue protein sequence, read N- to C-terminus: Exonuclease 1 (846 aa).

The segment at 1 to 99 is N-domain; sequence MGIQGLLQFI…RSRRERRQAN (99 aa). Residues Asp-30, Asp-78, Glu-150, Asp-152, Asp-171, Asp-173, Asp-225, and Asp-270 each coordinate Mg(2+). The interaction with MSH3 stretch occupies residues 129–387; that stretch reads MAHKVIKAAR…RPESGTVSDA (259 aa). Residues 138 to 229 are I-domain; the sequence is RSQGVDCLVA…ILSGCDYLSS (92 aa). The segment at 372-396 is disordered; it reads HRNYSPRPESGTVSDAPQLKENPST. At Ser-376 the chain carries Phosphoserine. A compositionally biased stretch (polar residues) spans 382–396; sequence GTVSDAPQLKENPST. The segment at 388–490 is interaction with MLH1; it reads PQLKENPSTV…NKFATFLQRK (103 aa). A Nuclear localization signal motif is present at residues 418–421; the sequence is KRPR. Phosphoserine occurs at positions 422 and 454. Lys-482 is subject to N6-acetyllysine. Position 581 is a phosphothreonine (Thr-581). Ser-598 and Ser-610 each carry phosphoserine. An interaction with MSH2 region spans residues 600 to 846; sequence PTLGTLRSCF…CGRVQRAIFQ (247 aa). A disordered region spans residues 618–781; sequence FSRTPSPSPS…SIQKRKHHNA (164 aa). 2 stretches are compositionally biased toward polar residues: residues 620-631 and 639-654; these read RTPSPSPSTALQ and SPTS…VSQL. Thr-621 is modified (phosphothreonine). Residues Ser-623, Ser-639, Ser-660, and Ser-674 each carry the phosphoserine modification. Residues 655–671 are compositionally biased toward basic and acidic residues; that stretch reads KSEESSDDESHPLREEA. 3 stretches are compositionally biased toward polar residues: residues 672-689, 713-722, and 743-754; these read CSSQ…SSNA, DSQSDQTSKL, and KSSSADSLSTTK. A Phosphoserine; by ATR modification is found at Ser-714. Phosphoserine is present on Ser-746. The interaction with MLH1 stretch occupies residues 787–846; the sequence is LQIKLNELWKNFGFKKDSEKLPPCKKPLSPVRDNIQLTPEAEEDIFNKPECGRVQRAIFQ.

Belongs to the XPG/RAD2 endonuclease family. EXO1 subfamily. Interacts with the MLH1-PMS2 heterodimer via MLH1. Interacts with MSH3. Interacts with the MSH2-MSH6 heterodimer via MSH2, and this interaction may increase the processivity of the 5'-&gt;3' exonuclease activity. Interacts with PCNA, and this interaction may both stimulate the cryptic 3'-&gt;5' exonuclease activity and suppress the 5'-&gt;3' exonuclease activity. Interacts with WRN, and this interaction stimulates both the 5'-&gt;3' exonuclease activity and cleavage of 5'-overhanging flap structures. Interacts with RECQL/RECQ1, and this interaction stimulates cleavage of 5'-overhanging flap structures. Interacts with DNA helicase ZGRF1; the interaction is increased following DNA damage induction. Mg(2+) serves as cofactor. Phosphorylated upon DNA damage and in response to agents stalling DNA replication, probably by ATM or ATR. Phosphorylation at Ser-454, Thr-621 and Ser-714 is induced upon DNA-damage caused by treatment with hydroxyurea (HU) but not upon IR treatment. The HU-induced EXO1 triple phosphorylation facilitates destabilization/degradation of the protein. In terms of tissue distribution, highly expressed in bone marrow, testis and thymus. Expressed at lower levels in colon, lymph nodes, ovary, placenta, prostate, small intestine, spleen and stomach.

The protein localises to the nucleus. Its function is as follows. 5'-&gt;3' double-stranded DNA exonuclease which may also possess a cryptic 3'-&gt;5' double-stranded DNA exonuclease activity. Functions in DNA mismatch repair (MMR) to excise mismatch-containing DNA tracts directed by strand breaks located either 5' or 3' to the mismatch. Also exhibits endonuclease activity against 5'-overhanging flap structures similar to those generated by displacement synthesis when DNA polymerase encounters the 5'-end of a downstream Okazaki fragment. Required for somatic hypermutation (SHM) and class switch recombination (CSR) of immunoglobulin genes. Essential for male and female meiosis. The sequence is that of Exonuclease 1 (EXO1) from Homo sapiens (Human).